The sequence spans 138 residues: DNA-directed RNA polymerase II subunit 4 (138 aa).

Residue S2 is modified to N-acetylserine.

Belongs to the eukaryotic RPB4 RNA polymerase subunit family. In terms of assembly, component of the RNA polymerase II complex consisting of at least 12 subunits. Interacts with NRPB7.

It localises to the nucleus. Its function is as follows. DNA-dependent RNA polymerase catalyzes the transcription of DNA into RNA using the four ribonucleoside triphosphates as substrates. Second largest component of RNA polymerase II which synthesizes mRNA precursors and many functional non-coding RNAs. Proposed to contribute to the polymerase catalytic activity and forms the polymerase active center together with the largest subunit. Pol II is the central component of the basal RNA polymerase II transcription machinery. It is composed of mobile elements that move relative to each other. The polypeptide is DNA-directed RNA polymerase II subunit 4 (NRPB4) (Arabidopsis thaliana (Mouse-ear cress)).